The primary structure comprises 233 residues: Translation initiation factor 6 (233 aa).

This sequence belongs to the eIF-6 family.

In terms of biological role, binds to the 50S ribosomal subunit and prevents its association with the 30S ribosomal subunit to form the 70S initiation complex. The protein is Translation initiation factor 6 of Aeropyrum pernix (strain ATCC 700893 / DSM 11879 / JCM 9820 / NBRC 100138 / K1).